A 1269-amino-acid polypeptide reads, in one-letter code: Histone-lysine N-methyltransferase SETDB1 (1269 aa).

Residues 9–63 (KELGISMDDLRELIDRELEKIEFVKQRKAQLLEMEQLVKQKEAEVDHVDKLFDNA) are a coiled coil. Disordered stretches follow at residues 85–121 (YKES…GEAV) and 153–188 (QKKS…DMSK). Residues 103 to 112 (EIPDEDDDDV) show a composition bias toward acidic residues. Residues 164–177 (SSHPSSPTSSVGGS) are compositionally biased toward low complexity. 2 consecutive Tudor domains span residues 250 to 312 (ENLT…RPWS) and 340 to 395 (VLLK…MFSM). The span at 396–414 (KTSNASTQEKQQAGQQRTR) shows a compositional bias: polar residues. The segment at 396–516 (KTSNASTQEK…FQSNQSVQPV (121 aa)) is disordered. Over residues 462 to 476 (DSQQAQSKKQVAKKS) the composition is skewed to low complexity. The segment covering 486-497 (SGQSSPIPTESV) has biased composition (polar residues). In terms of domain architecture, MBD spans 620–691 (HRGKNPLLVP…EMFCLDPYVL (72 aa)). One can recognise a Pre-SET domain in the interval 753–826 (VGCDCTDGCR…MCNNRLVQHG (74 aa)). Zn(2+) contacts are provided by C755, C757, C761, C767, C769, C807, C811, C813, and C818. The 416-residue stretch at 829 to 1244 (VRLQLFKTQN…AGTELTWDYN (416 aa)) folds into the SET domain. S-adenosyl-L-methionine contacts are provided by residues 839–841 (KGW), D877, and Y879. The disordered stretch occupies residues 894 to 1139 (EGYESDAKSS…VAASAGPVKR (246 aa)). Positions 919–932 (SGSEDQEESNDSSD) are enriched in acidic residues. Composition is skewed to basic and acidic residues over residues 968–989 (ASKD…ETSK) and 1021–1033 (ETDK…EASK). A compositionally biased stretch (low complexity) spans 1078 to 1094 (TEEVLTLSSSSDSEVGS). Over residues 1106–1120 (ATANDSDDIQTISSG) the composition is skewed to polar residues. Residues R1198 and 1201–1202 (NH) contribute to the S-adenosyl-L-methionine site. Residues C1204, C1257, C1259, and C1264 each contribute to the Zn(2+) site. Positions 1253 to 1269 (KKLLCCCGSTECRGRLL) constitute a Post-SET domain.

It belongs to the class V-like SAM-binding methyltransferase superfamily. Histone-lysine methyltransferase family. Suvar3-9 subfamily.

It localises to the nucleus. It is found in the chromosome. It carries out the reaction N(6),N(6)-dimethyl-L-lysyl(9)-[histone H3] + S-adenosyl-L-methionine = N(6),N(6),N(6)-trimethyl-L-lysyl(9)-[histone H3] + S-adenosyl-L-homocysteine + H(+). Histone methyltransferase that specifically trimethylates 'Lys-9' of histone H3. H3 'Lys-9' trimethylation represents a specific tag for epigenetic transcriptional repression by recruiting HP1 (CBX1, CBX3 and/or CBX5) proteins to methylated histones. Mainly functions in euchromatin regions, thereby playing a central role in the silencing of euchromatic genes. H3 'Lys-9' trimethylation is coordinated with DNA methylation. Plays a role in promoter hypermethylation and transcriptional silencing of tumor suppressor genes (TSGs) or other tumor-related genes. Also required to maintain a transcriptionally repressive state of genes in undifferentiated embryonic stem cells (ESCs). Associates at promoter regions of tumor suppressor genes (TSGs) leading to their gene silencing. The chain is Histone-lysine N-methyltransferase SETDB1 (setdb1) from Xenopus laevis (African clawed frog).